The primary structure comprises 275 residues: Exosome complex component RRP40 (275 aa).

The residue at position 2 (Ala2) is an N-acetylalanine. Lys151 participates in a covalent cross-link: Glycyl lysine isopeptide (Lys-Gly) (interchain with G-Cter in SUMO2).

Belongs to the RRP40 family. As to quaternary structure, component of the RNA exosome core complex (Exo-9), composed of EXOSC1, EXOSC2, EXOSC3, EXOSC4, EXOSC5, EXOSC6, EXOSC7, EXOSC8 and EXOSC9; within the complex interacts with EXOSC5 and EXOSC9. The catalytically inactive RNA exosome core complex (Exo-9) associates with the catalytic subunit EXOSC10/RRP6. Exo-9 may associate with DIS3 to form the nucleolar exosome complex, or DIS3L to form the cytoplasmic exosome complex. Exo-9 is formed by a hexameric base ring consisting of the heterodimers EXOSC4-EXOSC9, EXOSC5-EXOSC8 and EXOSC6-EXOSC7, and a cap ring consisting of EXOSC1, EXOSC2 and EXOSC3. The RNA exosome complex associates with cofactors C1D/RRP47, MPHOSPH6/MPP6 and MTREX/MTR4. Interacts with MPHOSPH6/MPP6; the interaction is direct. Interacts with GTPBP1. Interacts with ZC3HAV1. Interacts with DDX17 only in the presence of ZC3HAV1 in an RNA-independent manner. Interacts with DHX36; this interaction occurs in a RNase-insensitive manner. Interacts with HBS1L isoform 2.

Its subcellular location is the cytoplasm. The protein resides in the nucleus. The protein localises to the nucleolus. Non-catalytic component of the RNA exosome complex which has 3'-&gt;5' exoribonuclease activity and participates in a multitude of cellular RNA processing and degradation events. In the nucleus, the RNA exosome complex is involved in proper maturation of stable RNA species such as rRNA, snRNA and snoRNA, in the elimination of RNA processing by-products and non-coding 'pervasive' transcripts, such as antisense RNA species and promoter-upstream transcripts (PROMPTs), and of mRNAs with processing defects, thereby limiting or excluding their export to the cytoplasm. The RNA exosome may be involved in Ig class switch recombination (CSR) and/or Ig variable region somatic hypermutation (SHM) by targeting AICDA deamination activity to transcribed dsDNA substrates. In the cytoplasm, the RNA exosome complex is involved in general mRNA turnover and specifically degrades inherently unstable mRNAs containing AU-rich elements (AREs) within their 3' untranslated regions, and in RNA surveillance pathways, preventing translation of aberrant mRNAs. It seems to be involved in degradation of histone mRNA. The catalytic inactive RNA exosome core complex of 9 subunits (Exo-9) is proposed to play a pivotal role in the binding and presentation of RNA for ribonucleolysis, and to serve as a scaffold for the association with catalytic subunits and accessory proteins or complexes. EXOSC3 as peripheral part of the Exo-9 complex stabilizes the hexameric ring of RNase PH-domain subunits through contacts with EXOSC9 and EXOSC5. In Homo sapiens (Human), this protein is Exosome complex component RRP40 (EXOSC3).